The primary structure comprises 279 residues: Ribosomal RNA small subunit methyltransferase J (279 aa).

S-adenosyl-L-methionine-binding positions include 138 to 139 (ER) and D194.

It belongs to the methyltransferase superfamily. RsmJ family.

It localises to the cytoplasm. It carries out the reaction guanosine(1516) in 16S rRNA + S-adenosyl-L-methionine = N(2)-methylguanosine(1516) in 16S rRNA + S-adenosyl-L-homocysteine + H(+). In terms of biological role, specifically methylates the guanosine in position 1516 of 16S rRNA. In Acinetobacter baumannii (strain ATCC 17978 / DSM 105126 / CIP 53.77 / LMG 1025 / NCDC KC755 / 5377), this protein is Ribosomal RNA small subunit methyltransferase J.